A 247-amino-acid polypeptide reads, in one-letter code: MNIIPCSIKTLKGLYDISGVEVGQHFYWQIGGFQIHAQVLITSWVVITILLGSVVIAVRNPQTIPTDGQNFFEYVLEFIRDLSKTQIGEEYGPWVPFIGTMFLFIFVSNWSGALLPWKIIELPHGELAAPTNDINTTVALALLTSAAYFYAGLSKKGLSYFEKYIKPTPILLPINILEDFTKPLSLSFRLFGNILADELVVVVLVSLVPLVIPIPVMFLGLFTSGIQALIFATLAAAYIGESMEGHH.

5 helical membrane-spanning segments follow: residues 38-58, 95-115, 134-154, 199-219, and 220-240; these read QVLI…VIAV, VPFI…GALL, INTT…AGLS, LVVV…VMFL, and GLFT…AYIG.

This sequence belongs to the ATPase A chain family. F-type ATPases have 2 components, CF(1) - the catalytic core - and CF(0) - the membrane proton channel. CF(1) has five subunits: alpha(3), beta(3), gamma(1), delta(1), epsilon(1). CF(0) has four main subunits: a, b, b' and c.

The protein localises to the plastid. It localises to the chloroplast thylakoid membrane. In terms of biological role, key component of the proton channel; it plays a direct role in the translocation of protons across the membrane. This chain is ATP synthase subunit a, chloroplastic, found in Hordeum vulgare (Barley).